A 176-amino-acid chain; its full sequence is Peptide deformylase (176 aa).

Fe cation is bound by residues C97 and H139. E140 is a catalytic residue. H143 contributes to the Fe cation binding site.

It belongs to the polypeptide deformylase family. Fe(2+) is required as a cofactor.

It catalyses the reaction N-terminal N-formyl-L-methionyl-[peptide] + H2O = N-terminal L-methionyl-[peptide] + formate. In terms of biological role, removes the formyl group from the N-terminal Met of newly synthesized proteins. Requires at least a dipeptide for an efficient rate of reaction. N-terminal L-methionine is a prerequisite for activity but the enzyme has broad specificity at other positions. The sequence is that of Peptide deformylase from Thermomicrobium roseum (strain ATCC 27502 / DSM 5159 / P-2).